An 861-amino-acid polypeptide reads, in one-letter code: Probable beta-glucosidase A (861 aa).

The N-terminal stretch at methionine 1 to alanine 19 is a signal peptide. 3 N-linked (GlcNAc...) asparagine glycosylation sites follow: asparagine 62, asparagine 212, and asparagine 253. The active site involves aspartate 281. Residues asparagine 316, asparagine 323, asparagine 355, asparagine 443, asparagine 524, asparagine 543, asparagine 565, asparagine 669, asparagine 713, and asparagine 846 are each glycosylated (N-linked (GlcNAc...) asparagine).

It belongs to the glycosyl hydrolase 3 family.

It localises to the secreted. It catalyses the reaction Hydrolysis of terminal, non-reducing beta-D-glucosyl residues with release of beta-D-glucose.. The protein operates within glycan metabolism; cellulose degradation. Beta-glucosidases are one of a number of cellulolytic enzymes involved in the degradation of cellulosic biomass. Catalyzes the last step releasing glucose from the inhibitory cellobiose. This chain is Probable beta-glucosidase A (bglA), found in Aspergillus flavus (strain ATCC 200026 / FGSC A1120 / IAM 13836 / NRRL 3357 / JCM 12722 / SRRC 167).